The sequence spans 257 residues: Type III pantothenate kinase (257 aa).

Residue 5 to 12 (DIGNTNIK) coordinates ATP. Substrate is bound at residue 107–110 (GSDR). Residue aspartate 109 is the Proton acceptor of the active site. Threonine 133 serves as a coordination point for ATP.

It belongs to the type III pantothenate kinase family. As to quaternary structure, homodimer. NH4(+) serves as cofactor. It depends on K(+) as a cofactor.

It localises to the cytoplasm. It catalyses the reaction (R)-pantothenate + ATP = (R)-4'-phosphopantothenate + ADP + H(+). It functions in the pathway cofactor biosynthesis; coenzyme A biosynthesis; CoA from (R)-pantothenate: step 1/5. In terms of biological role, catalyzes the phosphorylation of pantothenate (Pan), the first step in CoA biosynthesis. The sequence is that of Type III pantothenate kinase from Ehrlichia ruminantium (strain Gardel).